The sequence spans 93 residues: Acylphosphatase (93 aa).

The Acylphosphatase-like domain maps to 7–93 (RLTAWVHGRV…ADAIAGFTER (87 aa)). Active-site residues include Arg22 and Asn40.

This sequence belongs to the acylphosphatase family.

The catalysed reaction is an acyl phosphate + H2O = a carboxylate + phosphate + H(+). This Mycolicibacterium vanbaalenii (strain DSM 7251 / JCM 13017 / BCRC 16820 / KCTC 9966 / NRRL B-24157 / PYR-1) (Mycobacterium vanbaalenii) protein is Acylphosphatase (acyP).